Here is a 104-residue protein sequence, read N- to C-terminus: NADH-quinone oxidoreductase subunit K (104 aa).

3 consecutive transmembrane segments (helical) span residues 7–27, 31–51, and 63–83; these read PDMAMLLAAGLFALGLLGVLV, LLFMLMSIEIMLNAAALAFVA, and VMFLMILSLAAAEAAIGLAIL.

Belongs to the complex I subunit 4L family. In terms of assembly, NDH-1 is composed of 14 different subunits. Subunits NuoA, H, J, K, L, M, N constitute the membrane sector of the complex.

The protein localises to the cell inner membrane. It catalyses the reaction a quinone + NADH + 5 H(+)(in) = a quinol + NAD(+) + 4 H(+)(out). NDH-1 shuttles electrons from NADH, via FMN and iron-sulfur (Fe-S) centers, to quinones in the respiratory chain. The immediate electron acceptor for the enzyme in this species is believed to be ubiquinone. Couples the redox reaction to proton translocation (for every two electrons transferred, four hydrogen ions are translocated across the cytoplasmic membrane), and thus conserves the redox energy in a proton gradient. This chain is NADH-quinone oxidoreductase subunit K, found in Gluconacetobacter diazotrophicus (strain ATCC 49037 / DSM 5601 / CCUG 37298 / CIP 103539 / LMG 7603 / PAl5).